Here is a 353-residue protein sequence, read N- to C-terminus: UPF0283 membrane protein YcjF (353 aa).

3 consecutive transmembrane segments (helical) span residues 70 to 90 (MVMG…VQWT), 100 to 120 (VALG…GSVV), and 213 to 233 (ESTL…FIAW).

Belongs to the UPF0283 family.

The protein resides in the cell inner membrane. This chain is UPF0283 membrane protein YcjF, found in Shigella boydii serotype 4 (strain Sb227).